We begin with the raw amino-acid sequence, 311 residues long: Coproporphyrin III ferrochelatase 1 (311 aa).

Residues Tyr-12, Arg-29, 45–46 (RY), Ser-53, and Tyr-124 each bind Fe-coproporphyrin III. 2 residues coordinate Fe(2+): His-182 and Glu-263.

The protein belongs to the ferrochelatase family.

Its subcellular location is the cytoplasm. It carries out the reaction Fe-coproporphyrin III + 2 H(+) = coproporphyrin III + Fe(2+). It functions in the pathway porphyrin-containing compound metabolism; protoheme biosynthesis. Involved in coproporphyrin-dependent heme b biosynthesis. Catalyzes the insertion of ferrous iron into coproporphyrin III to form Fe-coproporphyrin III. This Bacillus cereus (strain ZK / E33L) protein is Coproporphyrin III ferrochelatase 1.